The primary structure comprises 87 residues: MAQAQIDEQRRLQDLYVQLKKEINDGEGVAWLFQQKTYTDKDNKPTKATPPLRTTSSDLRLCDCNKQHQHNQSNCWMCGNKRSRRAT.

The protein localises to the host nucleus. Functionally, plays a role in viral DNA replication. In Mustela (ADV), this protein is Non-structural protein NS3.